A 181-amino-acid chain; its full sequence is Glutamyl-tRNA(Gln) amidotransferase subunit C, chloroplastic/mitochondrial (181 aa).

The protein belongs to the GatC family. As to quaternary structure, subunit of the heterotrimeric GatCAB amidotransferase (AdT) complex, composed of A, B and C subunits.

The protein localises to the mitochondrion. Its subcellular location is the plastid. It is found in the chloroplast. It catalyses the reaction L-glutamyl-tRNA(Gln) + L-glutamine + ATP + H2O = L-glutaminyl-tRNA(Gln) + L-glutamate + ADP + phosphate + H(+). Allows the formation of correctly charged Gln-tRNA(Gln) through the transamidation of misacylated Glu-tRNA(Gln) in chloroplasts and mitochondria. The reaction takes place in the presence of glutamine and ATP through an activated gamma-phospho-Glu-tRNA(Gln). The protein is Glutamyl-tRNA(Gln) amidotransferase subunit C, chloroplastic/mitochondrial of Picea sitchensis (Sitka spruce).